Reading from the N-terminus, the 65-residue chain is UPF0434 protein RPB_0294 (65 aa).

This sequence belongs to the UPF0434 family.

In Rhodopseudomonas palustris (strain HaA2), this protein is UPF0434 protein RPB_0294.